A 254-amino-acid polypeptide reads, in one-letter code: 5-oxoprolinase subunit A (254 aa).

It belongs to the LamB/PxpA family. As to quaternary structure, forms a complex composed of PxpA, PxpB and PxpC.

It catalyses the reaction 5-oxo-L-proline + ATP + 2 H2O = L-glutamate + ADP + phosphate + H(+). Catalyzes the cleavage of 5-oxoproline to form L-glutamate coupled to the hydrolysis of ATP to ADP and inorganic phosphate. This is 5-oxoprolinase subunit A from Burkholderia mallei (strain NCTC 10247).